A 195-amino-acid chain; its full sequence is Interferon tau-1 (195 aa).

An N-terminal signal peptide occupies residues 1 to 23; it reads MAFVLSLLMALVLVSYGPGRSLG. Disulfide bonds link Cys24/Cys122 and Cys52/Cys162. N-linked (GlcNAc...) asparagine glycosylation is present at Asn101.

This sequence belongs to the alpha/beta interferon family. IFN-alphaII subfamily. As to expression, constitutively and exclusively expressed in the mononuclear cells of the extraembryonic trophectoderm.

The protein localises to the secreted. Paracrine hormone primarily responsible for maternal recognition of pregnancy. Interacts with endometrial receptors, probably type I interferon receptors, and blocks estrogen receptor expression, preventing the estrogen-induced increase in oxytocin receptor expression in the endometrium. This results in the suppression of the pulsatile endometrial release of the luteolytic hormone prostaglandin F2-alpha, hindering the regression of the corpus luteum (luteolysis) and therefore a return to ovarian cyclicity. This, and a possible direct effect of IFN-tau on prostaglandin synthesis, leads in turn to continued ovarian progesterone secretion, which stimulates the secretion by the endometrium of the nutrients required for the growth of the conceptus. In summary, displays particularly high antiviral and antiproliferative potency concurrently with particular weak cytotoxicity, high antiluteolytic activity and immunomodulatory properties. In contrast with other IFNs, IFN-tau is not virally inducible. The sequence is that of Interferon tau-1 (IFNT1) from Bos taurus (Bovine).